Consider the following 418-residue polypeptide: MEKFRVIGSDKPLVGEVTISGAKNAALPILFASILAEEPVEVANVPHLRDIDTTMELLKRLGAKVSRNGSVHVDPSSINEYCAPYDLVKTMRASIWALGPLVARFGQGQVSLPGGCAIGARPVDLHITGLEQLGATITLEDGYVKAEVDGRLKGAHIVMDKVSVGATITIMCAAALAEGTTTLDNAAREPEIVDTADFLNKLGAKISGAGTDTITIEGVERLGGGKHSVVADRIETGTFLVAAAVSGGKVVCRNTNGHLLEAVLAKLEEAGALVETGEDWISVDMTDRELKAVSIRTAPHPGFPTDMQAQFTLLNMMAKGGGVITETIFENRFMHVPELMRMGAKAEIEGNTVICGDVESLSGAQVMATDLRASASLVIAGCIAKGETIVDRIYHIDRGYDKIENKLAALGANIERVS.

23-24 (KN) serves as a coordination point for phosphoenolpyruvate. Arginine 92 is a binding site for UDP-N-acetyl-alpha-D-glucosamine. Cysteine 116 serves as the catalytic Proton donor. At cysteine 116 the chain carries 2-(S-cysteinyl)pyruvic acid O-phosphothioketal. UDP-N-acetyl-alpha-D-glucosamine-binding positions include 121-125 (RPVDL), 161-164 (KVSV), aspartate 306, and isoleucine 328.

This sequence belongs to the EPSP synthase family. MurA subfamily.

It is found in the cytoplasm. It carries out the reaction phosphoenolpyruvate + UDP-N-acetyl-alpha-D-glucosamine = UDP-N-acetyl-3-O-(1-carboxyvinyl)-alpha-D-glucosamine + phosphate. It participates in cell wall biogenesis; peptidoglycan biosynthesis. Cell wall formation. Adds enolpyruvyl to UDP-N-acetylglucosamine. This chain is UDP-N-acetylglucosamine 1-carboxyvinyltransferase, found in Vibrio parahaemolyticus serotype O3:K6 (strain RIMD 2210633).